Here is a 919-residue protein sequence, read N- to C-terminus: Kinesin-like protein KIN-UA (919 aa).

Positions 1–68 (MSTTSGTGGV…SGGGGDAGVP (68 aa)) are disordered. Residues 15–51 (GTQRSSLRTQSSASTSSGGQKASVKSKSVLRKSSPAA) are compositionally biased toward low complexity. Residues 52–66 (LGGGSSKSGGGGDAG) show a composition bias toward gly residues. Positions 70–412 (RVRVAVRLRP…IMFGQRAMKV (343 aa)) constitute a Kinesin motor domain. 155-162 (GQTGTGKT) is an ATP binding site. The segment at 286-305 (TRDGLSSESNGNSHMTKSLK) is disordered. Over residues 291–301 (SSESNGNSHMT) the composition is skewed to polar residues. The D-BOX motif lies at 382-390 (RTSLVITIG). Coiled-coil stretches lie at residues 428-492 (SRRL…SIKK) and 530-621 (ALEE…LEQH). ARM repeat units lie at residues 650–689 (KPPV…NLAA), 691–731 (EANQ…NLAM), 733–773 (ETNQ…NLCG), and 775–814 (DKLQ…NFAK).

This sequence belongs to the TRAFAC class myosin-kinesin ATPase superfamily. Kinesin family. Ungrouped subfamily. As to quaternary structure, interacts (via C-terminus) with NEK5. In terms of tissue distribution, expressed in leaves, guard cells, trichomes, vascular tissues, stele of the root tip region and columella cells. Highest expression detected in guard cells.

It localises to the cytoplasm. Its subcellular location is the cytoskeleton. This Arabidopsis thaliana (Mouse-ear cress) protein is Kinesin-like protein KIN-UA.